Consider the following 283-residue polypeptide: uncharacterized protein (283 aa).

The active site involves aspartate 121.

Belongs to the pseudouridine synthase RluA family.

It catalyses the reaction a uridine in RNA = a pseudouridine in RNA. This is an uncharacterized protein from Bacillus subtilis (strain 168).